The primary structure comprises 453 residues: Ribulose bisphosphate carboxylase large chain (453 aa).

The propeptide occupies 1-2 (MS). Position 3 is an N-acetylproline (Pro-3). Lys-14 carries the N6,N6,N6-trimethyllysine modification. Residues Asn-123 and Thr-173 each coordinate substrate. Catalysis depends on Lys-175, which acts as the Proton acceptor. Lys-177 serves as a coordination point for substrate. Mg(2+) contacts are provided by Lys-201, Asp-203, and Glu-204. Lys-201 bears the N6-carboxylysine mark. Residue His-294 is the Proton acceptor of the active site. Residues Arg-295, His-327, and Ser-379 each contribute to the substrate site.

The protein belongs to the RuBisCO large chain family. Type I subfamily. Heterohexadecamer of 8 large chains and 8 small chains; disulfide-linked. The disulfide link is formed within the large subunit homodimers. Mg(2+) serves as cofactor. In terms of processing, the disulfide bond which can form in the large chain dimeric partners within the hexadecamer appears to be associated with oxidative stress and protein turnover.

Its subcellular location is the plastid. The protein localises to the chloroplast. It carries out the reaction 2 (2R)-3-phosphoglycerate + 2 H(+) = D-ribulose 1,5-bisphosphate + CO2 + H2O. The enzyme catalyses D-ribulose 1,5-bisphosphate + O2 = 2-phosphoglycolate + (2R)-3-phosphoglycerate + 2 H(+). In terms of biological role, ruBisCO catalyzes two reactions: the carboxylation of D-ribulose 1,5-bisphosphate, the primary event in carbon dioxide fixation, as well as the oxidative fragmentation of the pentose substrate in the photorespiration process. Both reactions occur simultaneously and in competition at the same active site. The polypeptide is Ribulose bisphosphate carboxylase large chain (Hydnophytum formicarum (Ant plant)).